A 643-amino-acid polypeptide reads, in one-letter code: E3 ubiquitin-protein ligase AMFR (643 aa).

Positions 39–67 (PEAGPGEPDQLTASLQPEPPAPARPSAGG) are disordered. 6 helical membrane-spanning segments follow: residues 82-102 (LFVW…AKLI), 122-142 (FWNF…VQTV), 145-165 (VVMW…VQLC), 186-206 (VLSL…VCSI), 215-235 (TLAF…HVIL), and 276-296 (HIHM…VIFM). The RING-type zinc finger occupies 341–379 (CAICWDSMQAARKLPCGHLFHNSCLRSWLEQDTSCPTCR). A helical transmembrane segment spans residues 429-449 (IASWLPSFSVEVMHTTNILGI). The CUE domain occupies 456 to 498 (QLNAMAHQIQEMFPQVPYHLVLQDLQLTRSVEITTDNILEGRI). Disordered stretches follow at residues 504–579 (TQRS…DERQ) and 596–624 (RFLN…PVTL). 3 positions are modified to phosphoserine: Ser516, Ser523, and Ser542. Over residues 548-563 (TLDFGEVEVEPSEVED) the composition is skewed to acidic residues. Positions 564-579 (FEARGSRFSKSADERQ) are enriched in basic and acidic residues. The interval 622-640 (VTLRRRMLAAAAERRLQKQ) is VCP/p97-interacting motif (VIM).

As to quaternary structure, interacts with RNF5. Also forms an ERAD complex containing VCP/p97, NGLY1; PSMC1; SAKS1 and RAD23B required for coupling retrotranslocation, ubiquitination and deglycosylation. Interacts with DERL1. Interacts (through a region distinct from the RING finger) with UBE2G2/UBC7. Component of the VCP/p97-AMFR/gp78 complex that enhances VCP/p97 binding to polyubiquitinated proteins for their degradation by the endoplasmic reticulum-associated degradation (ERAD) pathway. Interacts (via the VIM) with VCP/p97. Interacts (via its membrane domain) with INSIG1; the interaction initiates the sterol-mediated ubiquitination and degradation of HMGCR by the ERAD pathway. Interacts with AUP1, UBE2G2 and RNF139/TRC8; interaction with AUP1 facilitates interaction of AMFR with ubiquitin-conjugating enzyme UBE2G2 and ubiquitin ligase RNF139, leading to sterol-induced ubiquitination of HMGCR and its subsequent proteasomal degradation. Interacts with BAG6. Interacts with USP13 (via UBA 2 domain); the interaction is direct. Interacts with LMBR1L. Interacts with UBAC2 and CTNNB1. Interacts with C18orf32. In terms of assembly, (Microbial infection) Interacts with Staphylococcus aureus HIgB; this interaction regulates AMFR-mediated inflammation by promoting TAB3 ubiquitination to promote TAB3-TAK1 complex formation. In terms of processing, palmitoylation of the RING-type zing finger by ZDHHC6 promotes localization to the peripheral endoplasmic reticulum. As to expression, widely expressed.

The protein resides in the endoplasmic reticulum membrane. The catalysed reaction is [E2 ubiquitin-conjugating enzyme]-S-ubiquitinyl-L-cysteine + [acceptor protein]-L-cysteine = [E2 ubiquitin-conjugating enzyme]-L-cysteine + [acceptor protein]-S-ubiquitinyl-L-cysteine.. Its pathway is protein modification; protein ubiquitination. In terms of biological role, E3 ubiquitin-protein ligase that mediates the polyubiquitination of lysine and cysteine residues on target proteins, such as CD3D, CYP3A4, CFTR, INSIG1, SOAT2/ACAT2 and APOB for proteasomal degradation. Component of a VCP/p97-AMFR/gp78 complex that participates in the final step of endoplasmic reticulum-associated degradation (ERAD). The VCP/p97-AMFR/gp78 complex is involved in the sterol-accelerated ERAD degradation of HMGCR through binding to the HMGCR-INSIG1 complex at the ER membrane. In addition, interaction of AMFR with AUP1 facilitates interaction of AMFR with ubiquitin-conjugating enzyme UBE2G2 and ubiquitin ligase RNF139, leading to sterol-induced HMGCR ubiquitination. The ubiquitinated HMGCR is then released from the ER into the cytosol for subsequent destruction. In addition to ubiquitination on lysine residues, catalyzes ubiquitination on cysteine residues: together with INSIG1, mediates polyubiquitination of SOAT2/ACAT2 at 'Cys-277', leading to its degradation when the lipid levels are low. Catalyzes ubiquitination and subsequent degradation of INSIG1 when cells are depleted of sterols. Mediates polyubiquitination of INSIG2 at 'Cys-215' in some tissues, leading to its degradation. Also regulates ERAD through the ubiquitination of UBL4A a component of the BAG6/BAT3 complex. Also acts as a scaffold protein to assemble a complex that couples ubiquitination, retranslocation and deglycosylation. Mediates tumor invasion and metastasis as a receptor for the GPI/autocrine motility factor. In association with LMBR1L and UBAC2, negatively regulates the canonical Wnt signaling pathway in the lymphocytes by promoting the ubiquitin-mediated degradation of CTNNB1 and Wnt receptors FZD6 and LRP6. Regulates NF-kappa-B and MAPK signaling pathways by mediating 'Lys-27'-linked polyubiquitination of TAB3 and promoting subsequent TAK1/MAP3K7 activation. Required for proper lipid homeostasis. This chain is E3 ubiquitin-protein ligase AMFR, found in Homo sapiens (Human).